Consider the following 269-residue polypeptide: Zinc transporter ZupT (269 aa).

The next 8 membrane-spanning stretches (helical) occupy residues Ala12 to Phe32, Leu41 to Phe61, Asp75 to Ile95, Met126 to Ala146, Ala152 to Ile172, Val187 to Val207, Phe211 to Leu231, and Thr249 to Phe269. Positions 136 and 139 each coordinate Fe(2+). Zn(2+) is bound by residues Glu139 and His164. Fe(2+) is bound by residues Asn165, Glu168, and Glu197. Glu168 contacts Zn(2+).

Belongs to the ZIP transporter (TC 2.A.5) family. ZupT subfamily.

The protein resides in the cell inner membrane. It catalyses the reaction Zn(2+)(in) = Zn(2+)(out). Functionally, mediates zinc uptake. May also transport other divalent cations. In Neisseria meningitidis serogroup A / serotype 4A (strain DSM 15465 / Z2491), this protein is Zinc transporter ZupT.